The sequence spans 1024 residues: Error-prone DNA polymerase (1024 aa).

It belongs to the DNA polymerase type-C family. DnaE2 subfamily.

It localises to the cytoplasm. The catalysed reaction is DNA(n) + a 2'-deoxyribonucleoside 5'-triphosphate = DNA(n+1) + diphosphate. Functionally, DNA polymerase involved in damage-induced mutagenesis and translesion synthesis (TLS). It is not the major replicative DNA polymerase. In Vibrio vulnificus (strain YJ016), this protein is Error-prone DNA polymerase.